An 819-amino-acid polypeptide reads, in one-letter code: Ribosome-releasing factor 2, mitochondrial (819 aa).

Residues 1–30 (MWKWNVRRWAGARVNISKNRLSVINVGSRY) constitute a mitochondrion transit peptide. One can recognise a tr-type G domain in the interval 39–327 (SKVRNIGIIA…AIVNYLPSPI (289 aa)). Residues 48–55 (AHIDAGKT), 113–117 (DTPGH), and 165–168 (NKMD) contribute to the GTP site.

This sequence belongs to the TRAFAC class translation factor GTPase superfamily. Classic translation factor GTPase family. EF-G/EF-2 subfamily.

The protein resides in the mitochondrion. In terms of biological role, mitochondrial GTPase that mediates the disassembly of ribosomes from messenger RNA at the termination of mitochondrial protein biosynthesis. Not involved in the GTP-dependent ribosomal translocation step during translation elongation. The polypeptide is Ribosome-releasing factor 2, mitochondrial (Saccharomyces cerevisiae (strain RM11-1a) (Baker's yeast)).